Consider the following 165-residue polypeptide: Nucleotide-binding protein Rcas_1283 (165 aa).

The protein belongs to the YajQ family.

Its function is as follows. Nucleotide-binding protein. This Roseiflexus castenholzii (strain DSM 13941 / HLO8) protein is Nucleotide-binding protein Rcas_1283.